We begin with the raw amino-acid sequence, 274 residues long: Large ribosomal subunit protein uL2cz/uL2cy (274 aa).

Disordered stretches follow at residues 1–21 and 224–274; these read MAIHLYKTSTPGTRNGAVDSQ and NPVD…RRSK.

The protein belongs to the universal ribosomal protein uL2 family. Part of the 50S ribosomal subunit.

The protein resides in the plastid. Its subcellular location is the chloroplast. This chain is Large ribosomal subunit protein uL2cz/uL2cy (rpl2-A), found in Gossypium hirsutum (Upland cotton).